A 1221-amino-acid chain; its full sequence is DNA-directed RNA polymerase subunit beta' (1221 aa).

Residues Cys60, Cys62, Cys75, and Cys78 each coordinate Zn(2+). Residues Asp449, Asp451, and Asp453 each contribute to the Mg(2+) site. Zn(2+) contacts are provided by Cys821, Cys896, Cys903, and Cys906.

It belongs to the RNA polymerase beta' chain family. In terms of assembly, the RNAP catalytic core consists of 2 alpha, 1 beta, 1 beta' and 1 omega subunit. When a sigma factor is associated with the core the holoenzyme is formed, which can initiate transcription. It depends on Mg(2+) as a cofactor. Zn(2+) serves as cofactor.

It carries out the reaction RNA(n) + a ribonucleoside 5'-triphosphate = RNA(n+1) + diphosphate. Its function is as follows. DNA-dependent RNA polymerase catalyzes the transcription of DNA into RNA using the four ribonucleoside triphosphates as substrates. The polypeptide is DNA-directed RNA polymerase subunit beta' (Lactobacillus delbrueckii subsp. bulgaricus (strain ATCC 11842 / DSM 20081 / BCRC 10696 / JCM 1002 / NBRC 13953 / NCIMB 11778 / NCTC 12712 / WDCM 00102 / Lb 14)).